The primary structure comprises 469 residues: 3-isopropylmalate dehydratase large subunit (469 aa).

The [4Fe-4S] cluster site is built by Cys347, Cys410, and Cys413.

Belongs to the aconitase/IPM isomerase family. LeuC type 1 subfamily. Heterodimer of LeuC and LeuD. The cofactor is [4Fe-4S] cluster.

It catalyses the reaction (2R,3S)-3-isopropylmalate = (2S)-2-isopropylmalate. The protein operates within amino-acid biosynthesis; L-leucine biosynthesis; L-leucine from 3-methyl-2-oxobutanoate: step 2/4. Catalyzes the isomerization between 2-isopropylmalate and 3-isopropylmalate, via the formation of 2-isopropylmaleate. This is 3-isopropylmalate dehydratase large subunit from Burkholderia pseudomallei (strain 1106a).